A 97-amino-acid chain; its full sequence is ESAT-6-like protein EsxG (97 aa).

Residue Ser-2 is modified to N-acetylserine.

The protein belongs to the WXG100 family. CFP-10 subfamily. In terms of assembly, forms a tight 1:1 complex with EsxH.

Its subcellular location is the secreted. In terms of biological role, esxG, in complex with EsxH, disrupts ESCRT function and impairs host phagosome maturation, thereby promoting intracellular bacterial growth. The complex acts by interacting, via EsxH, with the host hepatocyte growth factor-regulated tyrosine kinase substrate (HGS/HRS), a component of the ESCRT machinery. EsxG stabilizes EsxH in the host cytosol. This chain is ESAT-6-like protein EsxG, found in Mycobacterium tuberculosis (strain ATCC 25618 / H37Rv).